The primary structure comprises 366 residues: Sulfite reductase, dissimilatory-type subunit beta (366 aa).

[4Fe-4S] cluster is bound by residues Cys-140, Cys-177, Cys-178, Cys-182, Cys-220, Cys-241, Cys-244, and Cys-247. Cys-182 is a binding site for siroheme. One can recognise a 4Fe-4S ferredoxin-type domain in the interval 232-262; it reads KTIKVDVEKCMYCGNCYTMCPGMPLFDPEND.

Heterotetramer of two alpha and two beta subunits. [4Fe-4S] cluster is required as a cofactor. Siroheme serves as cofactor.

It localises to the membrane. It catalyses the reaction [DsrC protein]-trisulfide + NAD(+) + 3 H2O = [DsrC protein]-dithiol + sulfite + NADH + 3 H(+). In terms of biological role, catalyzes the reduction of sulfite to sulfide. This is the terminal oxidation reaction in sulfate respiration. The protein is Sulfite reductase, dissimilatory-type subunit beta (dsrB) of Archaeoglobus fulgidus (strain ATCC 49558 / DSM 4304 / JCM 9628 / NBRC 100126 / VC-16).